The following is a 107-amino-acid chain: Anti-adapter protein IraM (107 aa).

Belongs to the IraM/RssC family.

It localises to the cytoplasm. Its function is as follows. Inhibits RpoS proteolysis by regulating RssB activity, thereby increasing the stability of the sigma stress factor RpoS during magnesium starvation. This is Anti-adapter protein IraM from Escherichia coli (strain 55989 / EAEC).